The sequence spans 204 residues: Somatotropin (204 aa).

A signal peptide spans 1 to 17 (MERAVLLLSLLSLGVSS). Glutamine 18 bears the Pyrrolidone carboxylic acid mark. Histidine 36 lines the Zn(2+) pocket. Cysteine 69 and cysteine 177 are joined by a disulfide. Residue glutamate 186 coordinates Zn(2+). A disulfide bridge connects residues cysteine 194 and cysteine 202.

Belongs to the somatotropin/prolactin family.

The protein localises to the secreted. Growth hormone plays an important role in growth control and involved in the regulation of several anabolic processes. The protein is Somatotropin (gh) of Perca flavescens (American yellow perch).